Consider the following 107-residue polypeptide: U1-lycotoxin-Ls1b (107 aa).

Residues 1–20 (MMKVLVVVALLVTLISYSSS) form the signal peptide. The propeptide occupies 21 to 41 (EGIDDLEADELLSLMANEQTR). 4 cysteine pairs are disulfide-bonded: Cys-44–Cys-59, Cys-51–Cys-68, Cys-58–Cys-86, and Cys-70–Cys-84.

The protein belongs to the neurotoxin 19 (CSTX) family. 04 (U1-Lctx) subfamily. Expressed by the venom gland.

It localises to the secreted. This Lycosa singoriensis (Wolf spider) protein is U1-lycotoxin-Ls1b.